The primary structure comprises 354 residues: Adenine deaminase (354 aa).

Zn(2+) is bound by residues His19, His21, and His211. Glu214 functions as the Proton donor in the catalytic mechanism. A Zn(2+)-binding site is contributed by Asp291. Asp292 serves as a coordination point for substrate.

Belongs to the metallo-dependent hydrolases superfamily. Adenosine and AMP deaminases family. Adenine deaminase type 2 subfamily. Zn(2+) serves as cofactor.

It localises to the cytoplasm. The protein resides in the nucleus. It carries out the reaction adenine + H2O + H(+) = hypoxanthine + NH4(+). Catalyzes the hydrolytic deamination of adenine to hypoxanthine. Plays an important role in the purine salvage pathway and in nitrogen catabolism. The sequence is that of Adenine deaminase (aah1) from Aspergillus fumigatus (strain ATCC MYA-4609 / CBS 101355 / FGSC A1100 / Af293) (Neosartorya fumigata).